We begin with the raw amino-acid sequence, 509 residues long: Flotillin-like protein FloT (509 aa).

At 1 to 3 the chain is on the cytoplasmic side; that stretch reads MTM. The stretch at 4 to 24 is an intramembrane region; sequence PIIMIIGVVFFLLIALIAVFI. At 25 to 509 the chain is on the cytoplasmic side; that stretch reads TKYRTAGPDE…KEAKTIQKSE (485 aa). Residues 119–301 form a PHB domain region; the sequence is AAEQFLGKSK…KIIERQKQIE (183 aa). Positions 203–509 are required for correct localization; that stretch reads RIAQVKRDAD…KEAKTIQKSE (307 aa). 4 consecutive short sequence motifs (EA repeat) follow at residues 342–344, 357–360, 370–373, and 390–394; these read AEA, AEAE, and AEAEA. The segment at 485 to 509 is not required for correct localization; that stretch reads KGNVKQSINELTNEIKEAKTIQKSE.

Belongs to the band 7/mec-2 family. Flotillin subfamily. Homooligomerizes. Oligomerizes in very large complexes in vitro. Interacts with FloA, FtsH, FtsX, OppA, SdhA and SecY in detergent-resistant membrane (DRM) fractions. Interacts with FtsH at midcell. Interacts with FloA. Interacts in vivo with KinC, FloA, FtsH and ResE. Interacts with ResE, colocalizes with ResE in FloT-only membrane rafts. Another study shows nearly complete colocalization with NfeD2, but only minor colocalization with FtsH or KinC.

It localises to the cell membrane. It is found in the membrane raft. In terms of biological role, found in functional membrane microdomains (FMM) that may be equivalent to eukaryotic membrane rafts. FMMs are highly dynamic and increase in number as cells age. FloA and FloT function is partially redundant; double deletions have marked synthetic phenotypes. Flotillins are thought to be important factors in membrane fluidity, especially during periods of rapid growth in rich media. Whether specific proteins are associated with FMMs is controversial; in one study FloT rafts have been shown to include proteins involved in adaptation to stationary phase, while FloA-FloT rafts include proteins involved in differentiation including sporulation, biofilm formation and DNA uptake competence. Another (more finely resolved) study only showed association of NfeD2 with FloT rafts of all the proteins examined. Aids homooligomerization of KinC and KinD but not KinB, may prevent incorrect hetero-association of the above kinases. Simultaneous overexpression of both FloA and FloT leads to defects in cell division and differentiation, in part caused by stabilization of FtsH and its subsequent increased ability to degrade proteins. Cells make more biofilm, are about half as long, have less EzrA and more frequent Z-rings. Involved in spatial organization of membranes, perhaps recruiting proteins (e.g. NfeD2) to specific membrane regions. Plays a role in phosphorylation of master regulator Spo0A, an early sporulation event. Plays a non-redundant role with dynamin-like protein A (dynA) in membrane dynamics and cell shape. This is Flotillin-like protein FloT from Bacillus subtilis (strain 168).